Reading from the N-terminus, the 192-residue chain is Transcription termination/antitermination protein NusG (192 aa).

The protein belongs to the NusG family.

In terms of biological role, participates in transcription elongation, termination and antitermination. The chain is Transcription termination/antitermination protein NusG from Rickettsia prowazekii (strain Madrid E).